The following is a 90-amino-acid chain: uncharacterized protein (90 aa).

This is an uncharacterized protein from Rickettsia prowazekii (strain Madrid E).